We begin with the raw amino-acid sequence, 310 residues long: Glutaminase (310 aa).

Residues Ser67, Asn118, Glu161, Asn168, Tyr192, Tyr244, and Val262 each coordinate substrate.

This sequence belongs to the glutaminase family. Homotetramer.

The catalysed reaction is L-glutamine + H2O = L-glutamate + NH4(+). This Legionella pneumophila (strain Corby) protein is Glutaminase.